A 930-amino-acid chain; its full sequence is Alanine--tRNA ligase (930 aa).

Residues histidine 595, histidine 599, cysteine 700, and histidine 704 each coordinate Zn(2+).

This sequence belongs to the class-II aminoacyl-tRNA synthetase family. The cofactor is Zn(2+).

The protein localises to the cytoplasm. It carries out the reaction tRNA(Ala) + L-alanine + ATP = L-alanyl-tRNA(Ala) + AMP + diphosphate. In terms of biological role, catalyzes the attachment of alanine to tRNA(Ala) in a two-step reaction: alanine is first activated by ATP to form Ala-AMP and then transferred to the acceptor end of tRNA(Ala). Also edits incorrectly charged Ser-tRNA(Ala) and Gly-tRNA(Ala) via its editing domain. This chain is Alanine--tRNA ligase, found in Malacoplasma penetrans (strain HF-2) (Mycoplasma penetrans).